Here is a 504-residue protein sequence, read N- to C-terminus: Fumitremorgin C monooxygenase (504 aa).

Residues 12 to 32 (LGVVGASLIVILGIILLFPLG) form a helical membrane-spanning segment. Cys-442 is a heme binding site.

It belongs to the cytochrome P450 family. The cofactor is heme.

The protein localises to the membrane. It catalyses the reaction fumitremorgin C + 2 reduced [NADPH--hemoprotein reductase] + 2 O2 = 12alpha,13alpha-dihydroxyfumitremorgin C + 2 oxidized [NADPH--hemoprotein reductase] + 2 H2O + 2 H(+). The protein operates within mycotoxin biosynthesis. Functionally, cytochrome P450 monooxygenase; part of the gene cluster that mediates the biosynthesis of fumitremorgins, indole alkaloids that carry not only intriguing chemical structures, but also interesting biological and pharmacological activities. The biosynthesis of fumitremorgin-type alkaloids begins by condensation of the two amino acids L-tryptophan and L-proline to brevianamide F, catalyzed by the non-ribosomal peptide synthetase ftmA. Brevianamide F is then prenylated by the prenyltransferase ftmPT1/ftmB in the presence of dimethylallyl diphosphate, resulting in the formation of tryprostatin B. The three cytochrome P450 monooxygenases, ftmP450-1/ftmC, ftmP450-2/ftmE and ftmP450-3/FtmG, are responsible for the conversion of tryprostatin B to 6-hydroxytryprostatin B, tryprostatin A to fumitremorgin C and fumitremorgin C to 12,13-dihydroxyfumitremorgin C, respectively. The putative methyltransferase ftmMT/ftmD is expected for the conversion of 6-hydroxytryprostatin B to tryprostatin A. FtmPT2/FtmH catalyzes the prenylation of 12,13-dihydroxyfumitre-morgin C in the presence of dimethylallyl diphosphate, resulting in the formation of fumitremorgin B. Fumitremorgin B is further converted to verruculogen by ftmOx1/ftmF via the insertion of an endoperoxide bond between the two prenyl moieties. In some fungal species, verruculogen is further converted to fumitremorgin A, but the enzymes involved in this step have not been identified yet. The protein is Fumitremorgin C monooxygenase of Aspergillus fumigatus (Neosartorya fumigata).